A 71-amino-acid polypeptide reads, in one-letter code: Biotinylated protein TB7.3 (71 aa).

Residues alanine 2–serine 71 form the Biotinyl-binding domain. Lysine 37 is modified (N6-biotinyllysine).

The polypeptide is Biotinylated protein TB7.3 (Mycobacterium bovis (strain ATCC BAA-935 / AF2122/97)).